Here is a 207-residue protein sequence, read N- to C-terminus: Large ribosomal subunit protein uL4 (207 aa).

The segment at 49–75 (HAVKNRSAVSGGGRKPWKQKGTGRARA) is disordered.

Belongs to the universal ribosomal protein uL4 family. Part of the 50S ribosomal subunit.

Functionally, one of the primary rRNA binding proteins, this protein initially binds near the 5'-end of the 23S rRNA. It is important during the early stages of 50S assembly. It makes multiple contacts with different domains of the 23S rRNA in the assembled 50S subunit and ribosome. In terms of biological role, forms part of the polypeptide exit tunnel. The protein is Large ribosomal subunit protein uL4 of Leuconostoc mesenteroides subsp. mesenteroides (strain ATCC 8293 / DSM 20343 / BCRC 11652 / CCM 1803 / JCM 6124 / NCDO 523 / NBRC 100496 / NCIMB 8023 / NCTC 12954 / NRRL B-1118 / 37Y).